The primary structure comprises 47 residues: Potassium channel toxin alpha-KTx 7.1 (47 aa).

The signal sequence occupies residues 1-12 (RGSVDYKDDDDK). 3 disulfides stabilise this stretch: Cys16-Cys37, Cys22-Cys42, and Cys26-Cys44.

The protein belongs to the short scorpion toxin superfamily. Potassium channel inhibitor family. Alpha-KTx 07 subfamily. Expressed by the venom gland.

Its subcellular location is the secreted. Functionally, potent inhibitor of the A-type voltage-gated potassium channels. Most potent inhibitor of Kv1.2/KCNA2 channels. Reversibly block the Shaker B potassium-channels (Kv1.1 sub-family). This is Potassium channel toxin alpha-KTx 7.1 (PTX-1) from Pandinus imperator (Emperor scorpion).